The sequence spans 397 residues: Cysteine protease ATG4A (397 aa).

C79 functions as the Nucleophile in the catalytic mechanism. Residues D279 and H281 contribute to the active site. The LIR signature appears at 392–395 (FEIL).

The protein belongs to the peptidase C54 family.

It localises to the cytoplasm. It carries out the reaction [protein]-C-terminal L-amino acid-glycyl-phosphatidylethanolamide + H2O = [protein]-C-terminal L-amino acid-glycine + a 1,2-diacyl-sn-glycero-3-phosphoethanolamine. Functionally, cysteine protease that plays a key role in autophagy by mediating both proteolytic activation and delipidation of ATG8 family proteins. The protease activity is required for proteolytic activation of ATG8 family proteins: cleaves the C-terminal amino acid of ATG8 proteins to reveal a C-terminal glycine. Exposure of the glycine at the C-terminus is essential for ATG8 proteins conjugation to phosphatidylethanolamine (PE) and insertion to membranes, which is necessary for autophagy. Protease activity is also required to counteract formation of high-molecular weight conjugates of ATG8 proteins (ATG8ylation): acts as a deubiquitinating-like enzyme that removes ATG8 conjugated to other proteins, such as ATG3. In addition to the protease activity, also mediates delipidation of ATG8 family proteins. Catalyzes delipidation of PE-conjugated forms of ATG8 proteins during macroautophagy. This chain is Cysteine protease ATG4A, found in Xenopus laevis (African clawed frog).